Here is a 615-residue protein sequence, read N- to C-terminus: Sodium-dependent noradrenaline transporter (615 aa).

A disordered region spans residues 1 to 28 (MLLARMNPQVQPENGGAGPGSEQPPRKR). Topologically, residues 1–60 (MLLARMNPQVQPENGGAGPGSEQPPRKRKEVLVVKERNGVQCLLASRDGDEQPRETWGKK) are cytoplasmic. A helical membrane pass occupies residues 61 to 86 (IDFLLSVVGFAVDLANVWRFPYLCYK). Gly69, Ala71, and Val72 together coordinate Na(+). Asp73 serves as a coordination point for (R)-noradrenaline. Asp73 serves as a coordination point for dopamine. Asn76 is a binding site for Na(+). Residues Tyr85 and Lys86 each coordinate (R)-noradrenaline. Over 87 to 90 (NGGG) the chain is Extracellular. The helical transmembrane segment at 91–114 (AFLIPYTLFLIIAGMPLFYMELAL) threads the bilayer. The Cytoplasmic portion of the chain corresponds to 115 to 133 (GQYNREGAATVWKICPFFK). A helical membrane pass occupies residues 134–164 (GVGYAVILIALYVGFYYNVIIAWSLYYLFSS). Residues Ala143 and Gly147 each coordinate (R)-noradrenaline. Ala143 is a binding site for dopamine. The Extracellular portion of the chain corresponds to 165 to 231 (FTPTLPWTDC…SSGIHDIGLP (67 aa)). Cys174 and Cys183 are disulfide-bonded. Residues Asn182, Asn190, and Asn196 are each glycosylated (N-linked (GlcNAc...) asparagine). A helical transmembrane segment spans residues 232 to 252 (QWQLLLCLIIVVIVLFFSLWK). Residues 253–255 (GVK) are Cytoplasmic-facing. Residues 256-280 (TSGKVVWITATLPYLVLFVLLVHGI) traverse the membrane as a helical segment. The Extracellular portion of the chain corresponds to 281–304 (TLPGASNGINAYLHIDFYRLKEAT). The chain crosses the membrane as a helical span at residues 305-330 (VWIDAATQIFFSLGAGFGVLIAFASY). A (R)-noradrenaline-binding site is contributed by Phe315. Phe315 contributes to the dopamine binding site. Ser316 contributes to the Na(+) binding site. The Cytoplasmic portion of the chain corresponds to 331-336 (NKFDNN). A helical membrane pass occupies residues 337 to 360 (CYRDALLTSTINCVTSFISGFAIF). Position 348 (Asn348) interacts with Na(+). Over 361-400 (SILGYMAHEHKVNIEDVATEGAGLVFILYPEAISTLSGST) the chain is Extracellular. Glu380 provides a ligand contact to (R)-noradrenaline. Glu380 contributes to the dopamine binding site. A helical transmembrane segment spans residues 401-426 (FWAIVFFIMLLALGIDSSMGGMEAVI). Na(+)-binding residues include Asp416 and Ser417. The Cytoplasmic segment spans residues 427-441 (TGLADDFQVLKRHRK). The chain crosses the membrane as a helical span at residues 442–462 (LFTFAVSFGTFLLALFCITKG). Gly463 is a topological domain (extracellular). The helical transmembrane segment at 464–490 (IYVLTLLDTFAAGTSILFAVLMEAIGV) threads the bilayer. The Cytoplasmic segment spans residues 491-520 (SWFYGVDRFSNDIQQMMGFKPGLYWRLCWK). The helical transmembrane segment at 521–543 (FVSPAFLLFVVIVSIINFKPLTY) threads the bilayer. Over 544–546 (DDY) the chain is Extracellular. A helical membrane pass occupies residues 547–567 (IFPLWANWVGWGIAGSSMVLV). At 568–615 (PAYIVYKFFSTRGSIRERLAYGITPASEHHLVAQRDIRQFQLQHWLAI) the chain is on the cytoplasmic side.

Belongs to the sodium:neurotransmitter symporter (SNF) (TC 2.A.22) family. SLC6A2 subfamily. As to quaternary structure, monomer. Can form homodimers in the cell membrane; homodimerization is mostly mediated by cholesterol and lipids, and regulates neurotransmitter transport activity. Interacts with PRKCABP. Palmitoylated. Palmitoylation regulates protein levels and neurotransmitter transport.

Its subcellular location is the cell membrane. The protein localises to the cell projection. It localises to the axon. It is found in the synapse. The protein resides in the synaptosome. It catalyses the reaction (R)-noradrenaline(out) + chloride(out) + Na(+)(out) = (R)-noradrenaline(in) + chloride(in) + Na(+)(in). The enzyme catalyses dopamine(out) + chloride(out) + Na(+)(out) = dopamine(in) + chloride(in) + Na(+)(in). It carries out the reaction dopamine(out) + chloride(out) + 2 Na(+)(out) = dopamine(in) + chloride(in) + 2 Na(+)(in). Inhibited by nisoxetine, oxaprotiline and desipramin. Functionally, mediates sodium- and chloride-dependent transport of norepinephrine (also known as noradrenaline), the primary signaling neurotransmitter in the autonomic sympathetic nervous system. Is responsible for norepinephrine re-uptake and clearance from the synaptic cleft, thus playing a crucial role in norepinephrine inactivation and homeostasis. Can also mediate sodium- and chloride-dependent transport of dopamine. This is Sodium-dependent noradrenaline transporter (SLC6A2) from Bos taurus (Bovine).